We begin with the raw amino-acid sequence, 188 residues long: MVSVNDLKTGLTVKTSDGSIWQVIEFQHVKPGKGAAFVRTKMRNLRNGAIQETTFRGGEKIERAHIERKRMQYLYPMGDTYVFMDNESYEQLELTSAQVKSALPYLLENMEVSIADYEGEILGIELPTSVVLTIVEADPGVKGDTASNVKKNATVETGHVIQVPLFIEPGEKVTVDTRTGEFMGRYNG.

This sequence belongs to the elongation factor P family.

It localises to the cytoplasm. The protein operates within protein biosynthesis; polypeptide chain elongation. Functionally, involved in peptide bond synthesis. Stimulates efficient translation and peptide-bond synthesis on native or reconstituted 70S ribosomes in vitro. Probably functions indirectly by altering the affinity of the ribosome for aminoacyl-tRNA, thus increasing their reactivity as acceptors for peptidyl transferase. This chain is Elongation factor P, found in Exiguobacterium sp. (strain ATCC BAA-1283 / AT1b).